A 343-amino-acid chain; its full sequence is 3-hydroxy-3-methylglutaryl-CoA lyase, cytoplasmic (343 aa).

Gly2 carries the N-myristoyl glycine lipid modification. In terms of domain architecture, Pyruvate carboxyltransferase spans 48–315 (VKIVEVGPRD…NTGVDLHKVM (268 aa)). Arg56 provides a ligand contact to substrate. Asp57, His248, and His250 together coordinate a divalent metal cation. Cys281 is a catalytic residue. Asn290 is a binding site for a divalent metal cation.

The protein belongs to the HMG-CoA lyase family. Requires a divalent metal cation as cofactor. As to expression, present at high level in duodenum and small intestine (at protein level).

The protein resides in the cytoplasm. It is found in the cytosol. It localises to the endoplasmic reticulum membrane. The catalysed reaction is (3S)-3-hydroxy-3-methylglutaryl-CoA = acetoacetate + acetyl-CoA. The protein operates within metabolic intermediate metabolism; (S)-3-hydroxy-3-methylglutaryl-CoA degradation; acetoacetate from (S)-3-hydroxy-3-methylglutaryl-CoA: step 1/1. Non-mitochondrial 3-hydroxy-3-methylglutaryl-CoA lyase that catalyzes a cation-dependent cleavage of (S)-3-hydroxy-3-methylglutaryl-CoA into acetyl-CoA and acetoacetate, a key step in ketogenesis, the products of which support energy production in nonhepatic animal tissues. The chain is 3-hydroxy-3-methylglutaryl-CoA lyase, cytoplasmic (Hmgcll1) from Rattus norvegicus (Rat).